Here is a 1137-residue protein sequence, read N- to C-terminus: Eukaryotic translation initiation factor 3 subunit A (1137 aa).

The 183-residue stretch at 319 to 501 folds into the PCI domain; the sequence is LQRMAAHVLL…NSIYFGTDLT (183 aa). Composition is skewed to basic and acidic residues over residues 588–623 and 829–899; these read QNNA…EERE and AAEE…RGGD. Disordered stretches follow at residues 588-631 and 829-1137; these read QNNA…QNEI and AAEE…VKRR. S908 carries the phosphoserine modification. 4 stretches are compositionally biased toward basic and acidic residues: residues 922–971, 985–1046, 1054–1083, and 1106–1127; these read RGIE…EPDS, SRDE…EPQR, DAPR…RGDQ, and AREE…KAAD.

This sequence belongs to the eIF-3 subunit A family. Component of the eukaryotic translation initiation factor 3 (eIF-3) complex. The eIF-3 complex interacts with pix.

The protein localises to the cytoplasm. In terms of biological role, RNA-binding component of the eukaryotic translation initiation factor 3 (eIF-3) complex, which is involved in protein synthesis of a specialized repertoire of mRNAs and, together with other initiation factors, stimulates binding of mRNA and methionyl-tRNAi to the 40S ribosome. The eIF-3 complex specifically targets and initiates translation of a subset of mRNAs involved in cell proliferation. The sequence is that of Eukaryotic translation initiation factor 3 subunit A from Drosophila yakuba (Fruit fly).